Here is a 519-residue protein sequence, read N- to C-terminus: Cell adhesion molecule CEACAM1 (519 aa).

The N-terminal stretch at 1-34 is a signal peptide; that stretch reads MELASARLLRGQIPWRGLLLTASLLTYWSPLTTA. At glutamine 35 the chain carries Pyrrolidone carboxylic acid. At 35–425 the chain is on the extracellular side; that stretch reads QVTVDAVPPN…QGNSGLSEGA (391 aa). A required for homophilic binding region spans residues 39–142; that stretch reads DAVPPNVVEE…QTSVQFRVYP (104 aa). An Ig-like V-type domain is found at 42–140; sequence PPNVVEEKSV…PIQTSVQFRV (99 aa). N-linked (GlcNAc...) asparagine glycans are attached at residues asparagine 87, asparagine 104, asparagine 113, asparagine 148, asparagine 152, asparagine 173, asparagine 197, asparagine 224, asparagine 256, asparagine 288, asparagine 292, asparagine 302, asparagine 315, and asparagine 331. Ig-like C2-type domains follow at residues 147–232, 237–317, and 325–403; these read PNVT…FNLD, PDAP…KNIT, and PSIQ…FRIS. Cysteine 167 and cysteine 215 are joined by a disulfide. Cysteines 259 and 299 form a disulfide. Cysteine 344 and cysteine 392 form a disulfide bridge. N-linked (GlcNAc...) asparagine; atypical glycosylation is present at asparagine 374. Residues 426 to 446 traverse the membrane as a helical segment; sequence IAGIVIGSVAGVALIAALAYF. Residues 445–457 are interaction with calmodulin; sequence YFLYSRKTGGGSD. At 447-519 the chain is on the cytoplasmic side; it reads LYSRKTGGGS…ETVYSVVKKK (73 aa). The interval 447 to 519 is interaction with FLNA; that stretch reads LYSRKTGGGS…ETVYSVVKKK (73 aa). Residues 455–519 form a disordered region; it reads GSDHRDLTEH…ETVYSVVKKK (65 aa). A compositionally biased stretch (basic and acidic residues) spans 456–466; the sequence is SDHRDLTEHKP. Positions 484 to 519 are required for interaction with PTPN11 and PTPN6 and for control of phosphorylation level; the sequence is DDVSYSVLNFNAQQSKRPTSASSSPTETVYSVVKKK. A Phosphotyrosine; by SRC, LCK, INSR and EGFR modification is found at tyrosine 488. The segment covering 489–512 has biased composition (polar residues); sequence SVLNFNAQQSKRPTSASSSPTETV. Position 503 is a phosphoserine (serine 503). The residue at position 513 (tyrosine 513) is a Phosphotyrosine; by INSR, SRC and LCK. Positions 513-516 are essential for interaction with PTPN11 and PTPN6; it reads YSVV.

This sequence belongs to the immunoglobulin superfamily. CEA family. In terms of assembly, monomer. Oligomer. Heterodimer. Homodimer. Cis-dimer/oligomer (via Ig-like C2-type and/or via cytoplasmic domains); induced by trans-homophilic cell adhesion through an allosteric mechanism transmitted by the Ig-like V-type domain, and is regulated by intracellular calcium and calmodulin. Interacts (via cytoplasmic domain) with calmodulin in a calcium dependent manner; reduces homophilic cell adhesion through dissociation of dimer. Isoform 1 interacts (via cytoplasmic domain) with PTPN11 (preferentially) and PTPN6; cis-homodimer form is preferred; this interaction is decreased by formation of isoform 1 / isoform 2 cis-heterodimers and is dependent on the monomer/dimer equilibrium; this interaction is phosphorylation-dependent. Isoform 1 interacts with LYN. Isoform 1 interacts (via cytoplasmic domain) with SRC (via SH2 domain); this interaction is regulated by trans-homophilic cell adhesion. Isoform 1 interacts (via cytoplasmic domain) with LCK; mediates phosphorylation at Tyr-488 and Tyr-513 resulting in PTPN6 association. Isoform 1 interacts with PTPN6; this interaction is phosphorylation-dependent and causes a profound decrease in TCR stimulation-induced CD247 and ZAP70 phosphorylation. Isoform 1 interacts with TCR/CD3 complex through TCR beta chain and CD3E; colocalizes at the cell surface and upon stimulation of the TCR/CD3 complex recruits PTPN6 in the TCR/CD3 complex, resulting in dephosphorylation of CD247 and ZAP70. Isoform 1 interacts (via cytoplasmic domain) with SHC1 (via SH2 domain); SHC1 mediates interaction with INSR or EGFR in a Ser-503 phosphorylation-dependent manner. Isoform 1 interacts with EGFR; the interaction is indirect. Isoform 1 interacts with CSF3R; down-regulates the CSF3R-STAT3 pathway through recruitment of PTPN6 that dephosphorylates CSF3R. Isoform 1 (phosphorylated form) interacts with TLR4 and SYK; recruits PTPN6 that dephosphorylates SYK, reducing the production of reactive oxygen species (ROS) and lysosome disruption, leading to a reduction of the inflammasome activity. Isoform 1 interacts with FLNA; inhibits cell migration and cell scattering by interfering with the interaction of FLNA with RALA. Isoform 1 interacts (via cytoplasmic domain) with PXN; the interaction is phosphotyrosyl-dependent. Isoform 1 interacts with KLRK1; recruits PTPN6 that dephosphorylates VAV1. Isoform 1 interacts with CEACAM8. Isoform 1 interacts with FASN; this interaction is insulin and phosphorylation-dependent; reduces fatty-acid synthase activity. Interacts (via Ig-like V-type) with HAVCR2 (via Ig-like V-type); facilitates the maturation and cell surface expression of HAVCR2 thereby regulating T-cell tolerance induction. Isoform 2 interacts (via the cytoplasmic domain) with ANXA2; this interaction is regulated by phosphorylation and appears in the AIIt complex. Interacts (via Lewis X moieties) with CD209 (via C-type lectin domain); this interaction is regulated by the glycosylation pattern of CEACAM1 on cell types and regulates contact between dendritic cells and neutrophils. Post-translationally, phosphorylated on serine and tyrosine. Isoform 1 is phosphorylated on tyrosine by Src family kinases like SRC and LCK and by receptor like CSF3R, EGFR and INSR upon stimulation. Phosphorylated at Ser-503; mediates activity. Phosphorylated at Tyr-488; regulates activity. Phosphorylated at Tyr-488 by EGFR and INSR upon stimulation; this phosphorylation is Ser-503-phosphorylation-dependent; mediates cellular internalization; increases interaction with FASN. Phosphorylated at Tyr-488 and Tyr-513 by LCK; mediates PTPN6 association and is regulated by homophilic ligation of CEACAM1 in the absence of T-cell activation. Phosphorylated at Tyr-513; mediates interaction with PTPN11. In terms of processing, phosphorylated on serine and threonine. As to expression, expressed in epithelia, vessel endothelia, leukocytes and platelets. Isoform 1 and isoform 2 are highly expressed in liver and intestine, moderately in lung, and weakly in muscle, kidney, and spleen. Expressed in granulocytes, lymphocytes, granulocytes, B cells, and T-cells.

The protein localises to the cell membrane. Its subcellular location is the lateral cell membrane. The protein resides in the apical cell membrane. It localises to the basal cell membrane. It is found in the cell junction. The protein localises to the adherens junction. Its subcellular location is the cytoplasmic vesicle. The protein resides in the secretory vesicle. It localises to the cell projection. It is found in the microvillus membrane. Cell adhesion protein that mediates homophilic cell adhesion in a calcium-independent manner. Plays a role as coinhibitory receptor in immune response, insulin action and also functions as an activator during angiogenesis. Its coinhibitory receptor function is phosphorylation- and PTPN6 -dependent, which in turn, suppress signal transduction of associated receptors by dephosphorylation of their downstream effectors. Plays a role in immune response, of T-cells, natural killer (NK) and neutrophils. Upon TCR/CD3 complex stimulation, inhibits TCR-mediated cytotoxicity by blocking granule exocytosis by mediating homophilic binding to adjacent cells, allowing interaction with and phosphorylation by LCK and interaction with the TCR/CD3 complex which recruits PTPN6 resulting in dephosphorylation of CD247 and ZAP70. Also inhibits T-cell proliferation and cytokine production through inhibition of JNK cascade and plays a crucial role in regulating autoimmunity and anti-tumor immunity by inhibiting T-cell through its interaction with HAVCR2. Upon natural killer (NK) cells activation, inhibit KLRK1-mediated cytolysis of CEACAM1-bearing tumor cells by trans-homophilic interactions with CEACAM1 on the target cell and lead to cis-interaction between CEACAM1 and KLRK1, allowing PTPN6 recruitment and then VAV1 dephosphorylation. Upon neutrophils activation negatively regulates IL1B production by recruiting PTPN6 to a SYK-TLR4-CEACAM1 complex, that dephosphorylates SYK, reducing the production of reactive oxygen species (ROS) and lysosome disruption, which in turn, reduces the activity of the inflammasome. Down-regulates neutrophil production by acting as a coinhibitory receptor for CSF3R by downregulating the CSF3R-STAT3 pathway through recruitment of PTPN6 that dephosphorylates CSF3R. Also regulates insulin action by promoting INS clearance and regulating lipogenesis in liver through regulating insulin signaling. Upon INS stimulation, undergoes phosphorylation by INSR leading to INS clearance by increasing receptor-mediated insulin endocytosis. This inernalization promotes interaction with FASN leading to receptor-mediated insulin degradation and to reduction of FASN activity leading to negative regulation of fatty acid synthesis. INSR-mediated phosphorylation also provokes a down-regulation of cell proliferation through SHC1 interaction resulting in decrease coupling of SHC1 to the MAPK3/ERK1-MAPK1/ERK2 and phosphatidylinositol 3-kinase pathways. Functions as activator in angiogenesis by promoting blood vessel remodeling through endothelial cell differentiation and migration and in arteriogenesis by increasing the number of collateral arteries and collateral vessel calibers after ischemia. Also regulates vascular permeability through the VEGFR2 signaling pathway resulting in control of nitric oxide production. Down-regulates cell growth in response to EGF through its interaction with SHC1 that mediates interaction with EGFR resulting in decrease coupling of SHC1 to the MAPK3/ERK1-MAPK1/ERK2 pathway. Negatively regulates platelet aggregation by decreasing platelet adhesion on type I collagen through the GPVI-FcRgamma complex. Inhibits cell migration and cell scattering through interaction with FLNA; interferes with the interaction of FLNA with RALA. Mediates bile acid transport activity in a phosphorylation dependent manner. Negatively regulates osteoclastogenesis. In terms of biological role, cell adhesion proteins that mediates homophilic cell adhesion in a calcium-independent manner. Promotes populations of T-cells regulating IgA production and secretion associated with control of the commensal microbiota and resistance to enteropathogens. This is Cell adhesion molecule CEACAM1 from Rattus norvegicus (Rat).